Reading from the N-terminus, the 176-residue chain is Interleukin-1 receptor antagonist protein (176 aa).

Positions Met1–Cys25 are cleaved as a signal peptide. Residues Cys91 and Cys141 are joined by a disulfide bond. Asn109 is a glycosylation site (N-linked (GlcNAc...) asparagine).

Belongs to the IL-1 family.

Its subcellular location is the secreted. In terms of biological role, anti-inflammatory antagonist of interleukin-1 family of proinflammatory cytokines such as interleukin-1beta/IL1B and interleukin-1alpha/IL1A. Protects from immune dysregulation and uncontrolled systemic inflammation triggered by IL1 for a range of innate stimulatory agents such as pathogens. In Canis lupus familiaris (Dog), this protein is Interleukin-1 receptor antagonist protein (IL1RN).